Here is a 591-residue protein sequence, read N- to C-terminus: Frizzled-9 (591 aa).

An N-terminal signal peptide occupies residues 1–22 (MAVAPLRGALLLWQLLAAGGAA). Residues 23–229 (LEIGRFDPER…EVFWSRRDKD (207 aa)) are Extracellular-facing. One can recognise an FZ domain in the interval 34–155 (RGAAPCQAVE…NDPHALCMEA (122 aa)). 5 cysteine pairs are disulfide-bonded: Cys39–Cys100, Cys47–Cys93, Cys84–Cys122, Cys111–Cys152, and Cys115–Cys139. Asn53 carries an N-linked (GlcNAc...) asparagine glycan. The tract at residues 58-172 (PNLLGHTSQG…PAEPHKGLGM (115 aa)) is required for Wnt-activated receptor activity. N-linked (GlcNAc...) asparagine glycosylation is present at Asn158. Residues 230 to 250 (FALVWMAVWSALCFFSTAFTV) form a helical membrane-spanning segment. Over 251–266 (LTFLLEPHRFQYPERP) the chain is Cytoplasmic. Residues 267 to 287 (IIFLSMCYNVYSLAFLIRAVA) form a helical membrane-spanning segment. Over 288–315 (GAQSVACDQEAGALYVIQEGLENTGCTL) the chain is Extracellular. The helical transmembrane segment at 316 to 336 (VFLLLYYFGMASSLWWVVLTL) threads the bilayer. Residues 337 to 355 (TWFLAAGKKWGHEAIEAHG) lie on the Cytoplasmic side of the membrane. A helical membrane pass occupies residues 356–376 (SYFHMAAWGLPALKTIVILTL). Topologically, residues 377–400 (RKVAGDELTGLCYVASTDAAALTG) are extracellular. Residues 401–421 (FVLVPLSGYLVLGSSFLLTGF) traverse the membrane as a helical segment. The Cytoplasmic portion of the chain corresponds to 422–447 (VALFHIRKIMKTGGTNTEKLEKLMVK). A helical membrane pass occupies residues 448–468 (IGVFSILYTVPATCVIVCYVY). The Extracellular segment spans residues 469–508 (ERLNMDFWRLRATEQPCAAAAGPGGRRDCSLPGGSVPTVA). The chain crosses the membrane as a helical span at residues 509–529 (VFMLKIFMSLVVGITSGVWVW). Over 530 to 591 (SSKTFQTWQS…DPSLENPTHL (62 aa)) the chain is Cytoplasmic. Residues 532 to 537 (KTFQTW) carry the Lys-Thr-X-X-X-Trp motif, mediates interaction with the PDZ domain of Dvl family members motif. Residues 554–591 (ACRAPGSYGRGTHCHYKAPTVVLHMTKTDPSLENPTHL) are required for CTNNB1 accumulation and TCF transcription factor activity.

The protein belongs to the G-protein coupled receptor Fz/Smo family. Ubiquitinated by ZNRF3, leading to its degradation by the proteasome. As to expression, expressed predominantly in adult and fetal brain, testis, eye, skeletal muscle and kidney. Moderately expressed in pancreas, thyroid, adrenal cortex, small intestine and stomach. Detected in fetal liver and kidney. Expressed in neural progenitor cells.

Its subcellular location is the cell membrane. Functionally, receptor for WNT2 that is coupled to the beta-catenin canonical signaling pathway, which leads to the activation of disheveled proteins, inhibition of GSK-3 kinase, nuclear accumulation of beta-catenin and activation of Wnt target genes. Plays a role in neuromuscular junction (NMJ) assembly by negatively regulating the clustering of acetylcholine receptors (AChR) through the beta-catenin canonical signaling pathway. May play a role in neural progenitor cells (NPCs) viability through the beta-catenin canonical signaling pathway by negatively regulating cell cycle arrest leading to inhibition of neuron apoptotic process. During hippocampal development, regulates neuroblast proliferation and apoptotic cell death. Controls bone formation through non canonical Wnt signaling mediated via ISG15. Positively regulates bone regeneration through non canonical Wnt signaling. The chain is Frizzled-9 (FZD9) from Homo sapiens (Human).